Consider the following 208-residue polypeptide: CASP-like protein 4A4 (208 aa).

Residues 1–53 (MKELKDHVVVITYGPSSEASVTASPVSQQTPSLFAYSVTPSASRFSSRRASVH) are Cytoplasmic-facing. Residues 54 to 74 (VIGLVLRFITMVLCFVSALSL) traverse the membrane as a helical segment. Topologically, residues 75-92 (AVNVQRPSKRHLTQNSSS) are extracellular. The N-linked (GlcNAc...) asparagine glycan is linked to Asn89. Residues 93 to 113 (FASYPELLYCFGVAVIGFVYT) form a helical membrane-spanning segment. The Cytoplasmic segment spans residues 114–141 (SLQTFKGVCDITHRGVLISEPLSDYISF). The chain crosses the membrane as a helical span at residues 142–162 (IFDQVICYLLVSSSSVAIAWI). The Extracellular segment spans residues 163–176 (QHINEDAIKTLRNN). Asn175 is a glycosylation site (N-linked (GlcNAc...) asparagine). Residues 177 to 197 (SIVSVSMSFSAFLVLTLSGLL) form a helical membrane-spanning segment. Residues 198–208 (SGYKLCKRFMW) lie on the Cytoplasmic side of the membrane.

It belongs to the Casparian strip membrane proteins (CASP) family. Homodimer and heterodimers.

The protein localises to the cell membrane. In Arabidopsis thaliana (Mouse-ear cress), this protein is CASP-like protein 4A4.